A 405-amino-acid chain; its full sequence is Transcriptional regulatory protein DEP1 (405 aa).

A compositionally biased stretch (low complexity) spans 1 to 12 (MSQQTPQESEQT). Disordered stretches follow at residues 1-26 (MSQQ…SVLS) and 49-171 (AGTE…VMPS). A Phosphoserine modification is found at serine 56. 2 stretches are compositionally biased toward basic and acidic residues: residues 86 to 108 (SLKR…KVPG) and 116 to 139 (EEEK…ARDE). Phosphoserine is present on serine 120. The segment covering 140 to 157 (QGDEGDNEEENNEEDNEN) has biased composition (acidic residues). Serine 370 is modified (phosphoserine).

As to quaternary structure, component of the RPD3C(L) complex composed of at least ASH1, CTI6, DEP1, PHO23, RPD3, RXT2, RXT3, SAP30, SDS3, SIN3, UME1 and UME6.

It is found in the cytoplasm. Its subcellular location is the nucleus. In terms of biological role, component of the RPD3C(L) histone deacetylase complex (HDAC) responsible for the deacetylation of lysine residues on the N-terminal part of the core histones (H2A, H2B, H3 and H4). Histone deacetylation gives a tag for epigenetic repression and plays an important role in transcriptional regulation, cell cycle progression and developmental events. The sequence is that of Transcriptional regulatory protein DEP1 (DEP1) from Saccharomyces cerevisiae (strain ATCC 204508 / S288c) (Baker's yeast).